The following is a 641-amino-acid chain: Chaperone protein DnaK (641 aa).

The residue at position 200 (Thr-200) is a Phosphothreonine; by autocatalysis. Over residues 605-623 the composition is skewed to low complexity; that stretch reads AAEQGGSADAASGNAQASK. The disordered stretch occupies residues 605–628; the sequence is AAEQGGSADAASGNAQASKAADDV.

This sequence belongs to the heat shock protein 70 family.

In terms of biological role, acts as a chaperone. In Xanthomonas oryzae pv. oryzae (strain KACC10331 / KXO85), this protein is Chaperone protein DnaK.